Consider the following 496-residue polypeptide: Glycerol kinase (496 aa).

Threonine 12 serves as a coordination point for ADP. Residues threonine 12, threonine 13, and serine 14 each coordinate ATP. Threonine 12 is a binding site for sn-glycerol 3-phosphate. Arginine 16 lines the ADP pocket. Sn-glycerol 3-phosphate contacts are provided by arginine 82, glutamate 83, and tyrosine 134. Glycerol is bound by residues arginine 82, glutamate 83, and tyrosine 134. Histidine 230 carries the phosphohistidine; by HPr modification. Aspartate 244 contributes to the sn-glycerol 3-phosphate binding site. Aspartate 244 and glutamine 245 together coordinate glycerol. 2 residues coordinate ADP: threonine 266 and glycine 309. Residues threonine 266, glycine 309, glutamine 313, and glycine 410 each contribute to the ATP site. The ADP site is built by glycine 410 and asparagine 414.

It belongs to the FGGY kinase family. In terms of processing, the phosphoenolpyruvate-dependent sugar phosphotransferase system (PTS), including enzyme I, and histidine-containing protein (HPr) are required for the phosphorylation of, which leads to the activation of the enzyme.

The catalysed reaction is glycerol + ATP = sn-glycerol 3-phosphate + ADP + H(+). The protein operates within polyol metabolism; glycerol degradation via glycerol kinase pathway; sn-glycerol 3-phosphate from glycerol: step 1/1. With respect to regulation, inhibited by fructose 1,6-bisphosphate and p-chloromercuribenzoate (PCMB). In terms of biological role, key enzyme in the regulation of glycerol uptake and metabolism. Catalyzes the phosphorylation of glycerol to yield sn-glycerol 3-phosphate. The protein is Glycerol kinase of Thermus thermophilus.